A 25-amino-acid polypeptide reads, in one-letter code: Caerin-1.10 (25 aa).

Leucine 25 carries the post-translational modification Leucine amide.

This sequence belongs to the frog skin active peptide (FSAP) family. Caerin subfamily. Expressed by the skin dorsal glands.

Its subcellular location is the secreted. Antibacterial peptide with wide spectrum of activity. The chain is Caerin-1.10 from Litoria rothii (Roth's tree frog).